The chain runs to 498 residues: Probable dipeptidase B (498 aa).

Cys26 is an active-site residue.

Belongs to the peptidase C69 family.

It catalyses the reaction an L-aminoacyl-L-amino acid + H2O = 2 an L-alpha-amino acid. In Streptococcus pyogenes serotype M1, this protein is Probable dipeptidase B (pepDB).